A 208-amino-acid chain; its full sequence is Putative 3-methyladenine DNA glycosylase (208 aa).

Belongs to the DNA glycosylase MPG family.

The sequence is that of Putative 3-methyladenine DNA glycosylase from Lactobacillus delbrueckii subsp. bulgaricus (strain ATCC BAA-365 / Lb-18).